Here is a 136-residue protein sequence, read N- to C-terminus: Histone H3.3 type c (136 aa).

The segment at 1-30 is disordered; it reads MARTKQTARKSTGAKVPRKHLSSKSSFPSK. Lysine 5 carries the post-translational modification N6,N6,N6-trimethyllysine; by set1; alternate. The residue at position 5 (lysine 5) is an N6,N6-dimethyllysine; by set1; alternate. 2 positions are modified to N6-acetyllysine; alternate: lysine 5 and lysine 10. The residue at position 5 (lysine 5) is an N6-methyllysine; by set1; alternate. Lysine 10 carries the post-translational modification N6,N6,N6-trimethyllysine; alternate. At lysine 10 the chain carries N6,N6-dimethyllysine; alternate. Position 10 is an N6-methyllysine; alternate (lysine 10). Serine 11 is subject to Phosphoserine. The residue at position 15 (lysine 15) is an N6-acetyllysine. N6-acetyllysine; alternate occurs at positions 19, 24, and 37. An N6-methyllysine; alternate mark is found at lysine 19, lysine 24, and lysine 37. N6,N6,N6-trimethyllysine; alternate is present on lysine 37. Position 37 is an N6,N6-dimethyllysine; alternate (lysine 37). Position 57 is an N6-acetyllysine (lysine 57). The residue at position 80 (lysine 80) is an N6,N6,N6-trimethyllysine; alternate. Lysine 80 carries the post-translational modification N6,N6-dimethyllysine; alternate. Lysine 80 bears the N6-methyllysine; alternate mark.

This sequence belongs to the histone H3 family. As to quaternary structure, the nucleosome is a histone octamer containing two molecules each of H2A, H2B, H3 and H4 assembled in one H3-H4 heterotetramer and two H2A-H2B heterodimers. The octamer wraps approximately 147 bp of DNA. Post-translationally, acetylation is generally linked to gene activation. In terms of processing, different methylation states of H3K4 mark distinct developmental phases. H3K4me2 is associated with euchromatic regions. H3K4me3 is a mark of active chromatin. set1 is responsible for all mono-, di- and tri-methylation of H3K4. H3K4me facilitates subsequent acetylation of H3 and H4. Methylation at H3K9 is linked to gene repression. H3S10ph, which is linked to gene activation, prevents methylation at H3K9 but facilitates acetylation of H3 and H4.

It is found in the nucleus. Its subcellular location is the chromosome. Its function is as follows. Core component of nucleosome. Nucleosomes wrap and compact DNA into chromatin, limiting DNA accessibility to the cellular machineries which require DNA as a template. Histones thereby play a central role in transcription regulation, DNA repair, DNA replication and chromosomal stability. DNA accessibility is regulated via a complex set of post-translational modifications of histones, also called histone code, and nucleosome remodeling. The sequence is that of Histone H3.3 type c (H3c) from Dictyostelium discoideum (Social amoeba).